The primary structure comprises 252 residues: MSDIVLITGATSGFGRAAARRFADAGWSLILTGRREERLTELAEELSQRVRVHTAVLDVRDEKAVQSVIDELPEAFRRVKTLVNNAGLALAPQPAQDVDLADWHTMIDTNIKGLVNVTHAVLPTLIETGAGASIVNLGSVAGQWPYPGSHVYGASKAFVQQFTYNLRCDLQGTGVRVTDVAPGMAETEFTLVRTGGDQAASDALYRDTTPLQAEDVAELIFYTATLPAHVNVNRLEVMPTRQAWSAFAVDRD.

6–30 contacts NADP(+); the sequence is LITGATSGFGRAAARRFADAGWSLI. Ser139 is a substrate binding site. Tyr152 serves as the catalytic Proton acceptor.

The protein belongs to the short-chain dehydrogenases/reductases (SDR) family. In terms of assembly, homodimer and heterotetramer.

It carries out the reaction 2-hydroxyethane-1-sulfonate + NADP(+) = sulfoacetaldehyde + NADPH + H(+). The protein operates within organosulfur degradation. In terms of biological role, catalyzes the formation of isethionate from 2-sulfoacetaldehyde in the deaminative pathway of taurine. Constitutively expressed enzyme that only mediates a small part of the activity observed in taurine-grown cells. The polypeptide is Sulfoacetaldehyde reductase 2 (isfD2) (Chromohalobacter salexigens (strain ATCC BAA-138 / DSM 3043 / CIP 106854 / NCIMB 13768 / 1H11)).